Here is a 396-residue protein sequence, read N- to C-terminus: Phosphoglycerate kinase (396 aa).

Substrate-binding positions include aspartate 21–asparagine 23, arginine 36, histidine 59–lysine 62, arginine 119, and arginine 156. ATP contacts are provided by residues lysine 206, glutamate 325, and glycine 352–serine 355.

Belongs to the phosphoglycerate kinase family. As to quaternary structure, monomer.

It localises to the cytoplasm. It carries out the reaction (2R)-3-phosphoglycerate + ATP = (2R)-3-phospho-glyceroyl phosphate + ADP. It participates in carbohydrate degradation; glycolysis; pyruvate from D-glyceraldehyde 3-phosphate: step 2/5. The polypeptide is Phosphoglycerate kinase (Staphylococcus haemolyticus (strain JCSC1435)).